We begin with the raw amino-acid sequence, 196 residues long: Pyridoxine/pyridoxamine 5'-phosphate oxidase (196 aa).

FMN-binding positions include 46–51, 61–62, arginine 67, lysine 68, and glutamine 90; these read RNVLYK and FT. Lysine 51 contributes to the substrate binding site. Residues tyrosine 108, arginine 112, and serine 116 each coordinate substrate. Residues 125–126 and tryptophan 169 each bind FMN; that span reads QS. 175-177 serves as a coordination point for substrate; the sequence is RLH. Arginine 179 contacts FMN.

It belongs to the pyridoxamine 5'-phosphate oxidase family. In terms of assembly, homodimer. It depends on FMN as a cofactor.

The catalysed reaction is pyridoxamine 5'-phosphate + O2 + H2O = pyridoxal 5'-phosphate + H2O2 + NH4(+). It catalyses the reaction pyridoxine 5'-phosphate + O2 = pyridoxal 5'-phosphate + H2O2. It participates in cofactor metabolism; pyridoxal 5'-phosphate salvage; pyridoxal 5'-phosphate from pyridoxamine 5'-phosphate: step 1/1. Its pathway is cofactor metabolism; pyridoxal 5'-phosphate salvage; pyridoxal 5'-phosphate from pyridoxine 5'-phosphate: step 1/1. Catalyzes the oxidation of either pyridoxine 5'-phosphate (PNP) or pyridoxamine 5'-phosphate (PMP) into pyridoxal 5'-phosphate (PLP). This chain is Pyridoxine/pyridoxamine 5'-phosphate oxidase, found in Coxiella burnetii (strain RSA 493 / Nine Mile phase I).